The following is a 344-amino-acid chain: Phenylalanine--tRNA ligase alpha subunit (344 aa).

Glutamate 256 provides a ligand contact to Mg(2+).

Belongs to the class-II aminoacyl-tRNA synthetase family. Phe-tRNA synthetase alpha subunit type 1 subfamily. In terms of assembly, tetramer of two alpha and two beta subunits. Mg(2+) is required as a cofactor.

It is found in the cytoplasm. The catalysed reaction is tRNA(Phe) + L-phenylalanine + ATP = L-phenylalanyl-tRNA(Phe) + AMP + diphosphate + H(+). In Bacillus cytotoxicus (strain DSM 22905 / CIP 110041 / 391-98 / NVH 391-98), this protein is Phenylalanine--tRNA ligase alpha subunit.